The sequence spans 224 residues: PKHD-type hydroxylase Tgr7_2199 (224 aa).

A Fe2OG dioxygenase domain is found at 78–176 (KLSGAFFARY…RLVAVAWAES (99 aa)). His-96, Asp-98, and His-157 together coordinate Fe cation. Arg-167 is a 2-oxoglutarate binding site.

Requires Fe(2+) as cofactor. It depends on L-ascorbate as a cofactor.

This chain is PKHD-type hydroxylase Tgr7_2199, found in Thioalkalivibrio sulfidiphilus (strain HL-EbGR7).